The chain runs to 630 residues: CREB-regulated transcription coactivator 1 (630 aa).

Phosphoserine is present on residues serine 64 and serine 113. Disordered stretches follow at residues 142 to 174 (ADTS…GPQD), 187 to 221 (GMEE…VPGI), 256 to 331 (SPLP…LSPL), and 356 to 475 (QAGS…HTST). Position 149 is a phosphothreonine (threonine 149). The residue at position 151 (serine 151) is a Phosphoserine; by SIK1 and SIK2. Over residues 151 to 167 (SDSALHQSTMTPTQAES) the composition is skewed to polar residues. At threonine 161 the chain carries Phosphothreonine. Over residues 194–208 (ETDKTLSKQSWDSKK) the composition is skewed to basic and acidic residues. A Nuclear export signal motif is present at residues 242–258 (TGGSLPDLSTIHFPSPL). The span at 256–270 (SPLPTPLDPEEPPFP) shows a compositional bias: pro residues. Polar residues-rich tracts occupy residues 292-301 (GMNTPSSSPQ) and 310-331 (LSLS…LSPL). Pro residues predominate over residues 361–384 (QPPPQPQPPPPPPPVSQQQPPPPQ). A compositionally biased stretch (low complexity) spans 385–394 (VSVGLPQGGP). 2 stretches are compositionally biased toward polar residues: residues 414 to 426 (VPST…TESP) and 450 to 475 (PATQ…HTST).

This sequence belongs to the TORC family. In terms of assembly, binds, as a tetramer, through its N-terminal region, with the bZIP domain of CREB1. 'Arg-314' in the bZIP domain of CREB1 is essential for this interaction. Interaction, via its C-terminal, with TAF4, enhances recruitment of TAF4 to CREB1. Interacts with 14-3-3 proteins, including YWHAE/14-3-3 epsilon. Interacts with calmodulin-dependent catalytic subunit PPP3CA/calcineurin A. Post-translationally, phosphorylation/dephosphorylation states of Ser-151 are required for regulating transduction of CREB activity. TORCs are inactive when phosphorylated, and active when dephosphorylated at this site. This primary site of phosphorylation is mediated by SIKs (SIK1 and SIK2), is regulated by cAMP and calcium levels and is dependent on the phosphorylation of SIKs by LKB1. In terms of tissue distribution, highly expressed in developing cortical neurons, peaking during dendrite development.

The protein resides in the cytoplasm. Its subcellular location is the nucleus. In terms of biological role, transcriptional coactivator for CREB1 which activates transcription through both consensus and variant cAMP response element (CRE) sites. Acts as a coactivator, in the SIK/TORC signaling pathway, being active when dephosphorylated and acts independently of CREB1 'Ser-133' phosphorylation. Enhances the interaction of CREB1 with TAF4. Regulates the expression of specific CREB-activated genes such as the steroidogenic gene, StAR. Potent coactivator of PGC1alpha and inducer of mitochondrial biogenesis in muscle cells. In the hippocampus, involved in late-phase long-term potentiation (L-LTP) maintenance at the Schaffer collateral-CA1 synapses. May be required for dendritic growth of developing cortical neurons. In concert with SIK1, regulates the light-induced entrainment of the circadian clock. In response to light stimulus, coactivates the CREB-mediated transcription of PER1 which plays an important role in the photic entrainment of the circadian clock. The chain is CREB-regulated transcription coactivator 1 (Crtc1) from Rattus norvegicus (Rat).